Consider the following 547-residue polypeptide: Chaperonin GroEL (547 aa).

Residues 29–32, 86–90, G413, and D498 each bind ATP; these read TLGP and DGTTT.

It belongs to the chaperonin (HSP60) family. In terms of assembly, forms a cylinder of 14 subunits composed of two heptameric rings stacked back-to-back. Interacts with the co-chaperonin GroES.

The protein localises to the cytoplasm. The enzyme catalyses ATP + H2O + a folded polypeptide = ADP + phosphate + an unfolded polypeptide.. Functionally, together with its co-chaperonin GroES, plays an essential role in assisting protein folding. The GroEL-GroES system forms a nano-cage that allows encapsulation of the non-native substrate proteins and provides a physical environment optimized to promote and accelerate protein folding. The protein is Chaperonin GroEL of Herpetosiphon aurantiacus (strain ATCC 23779 / DSM 785 / 114-95).